A 438-amino-acid chain; its full sequence is Histidinol dehydrogenase (438 aa).

Residues Tyr-135, Gln-193, and Asn-216 each contribute to the NAD(+) site. Substrate is bound by residues Ser-243, Gln-265, and His-268. Zn(2+)-binding residues include Gln-265 and His-268. Catalysis depends on proton acceptor residues Glu-332 and His-333. Residues His-333, Asp-366, Glu-420, and His-425 each contribute to the substrate site. Asp-366 contacts Zn(2+). Zn(2+) is bound at residue His-425.

This sequence belongs to the histidinol dehydrogenase family. Zn(2+) is required as a cofactor.

It catalyses the reaction L-histidinol + 2 NAD(+) + H2O = L-histidine + 2 NADH + 3 H(+). It functions in the pathway amino-acid biosynthesis; L-histidine biosynthesis; L-histidine from 5-phospho-alpha-D-ribose 1-diphosphate: step 9/9. In terms of biological role, catalyzes the sequential NAD-dependent oxidations of L-histidinol to L-histidinaldehyde and then to L-histidine. The sequence is that of Histidinol dehydrogenase from Shewanella oneidensis (strain ATCC 700550 / JCM 31522 / CIP 106686 / LMG 19005 / NCIMB 14063 / MR-1).